The sequence spans 291 residues: Pentonolactonase XacC (291 aa).

Residues Glu-15, Asn-141, and Asp-191 each coordinate a divalent metal cation. Asp-191 serves as the catalytic Proton donor/acceptor.

Belongs to the SMP-30/CGR1 family. Monomer. A divalent metal cation is required as a cofactor.

It carries out the reaction L-arabinono-1,4-lactone + H2O = L-arabinonate + H(+). The enzyme catalyses D-xylono-1,4-lactone + H2O = D-xylonate + H(+). The protein operates within carbohydrate degradation. In terms of biological role, pentonolactonase involved in D-arabinose and D-xylose catabolism. Catalyzes the hydrolysis of both L-arabino-gamma-lactone and D-xylono-gamma-lactone to the corresponding acids. Can also hydrolyze D-galactono-gamma-lactone and D-glucono-delta-lactone. The sequence is that of Pentonolactonase XacC from Haloferax volcanii (strain ATCC 29605 / DSM 3757 / JCM 8879 / NBRC 14742 / NCIMB 2012 / VKM B-1768 / DS2) (Halobacterium volcanii).